We begin with the raw amino-acid sequence, 907 residues long: Schlafen family member 13 (907 aa).

The interval 1–353 (MEIHPSLVVE…WVRMMVDIGP (353 aa)) is n'-domain region. Catalysis depends on residues Glu205 and Glu210. His281, Cys283, and Cys318 together coordinate Zn(2+). 604–611 (GMPGSGKT) is a binding site for ATP.

The protein belongs to the Schlafen family. Subgroup III subfamily. Mg(2+) is required as a cofactor.

Its subcellular location is the cytoplasm. In terms of biological role, endoribonuclease that cleaves tRNAs and rRNAs. Cleaves tRNAs 11 nucleotides from the 3'-terminus at the acceptor stem. Does not act on tRNA(Sec). This is Schlafen family member 13 from Rattus norvegicus (Rat).